The chain runs to 174 residues: Translationally-controlled tumor protein homolog 1 (174 aa).

In terms of domain architecture, TCTP spans 1 to 174; that stretch reads MRVFKDIVGY…FKDGLESVKY (174 aa).

It belongs to the TCTP family.

The protein localises to the cytoplasm. Functionally, involved in calcium binding and microtubule stabilization. This is Translationally-controlled tumor protein homolog 1 from Dictyostelium discoideum (Social amoeba).